Consider the following 82-residue polypeptide: Small ribosomal subunit protein bS16 (82 aa).

The protein belongs to the bacterial ribosomal protein bS16 family.

The chain is Small ribosomal subunit protein bS16 from Salmonella agona (strain SL483).